We begin with the raw amino-acid sequence, 212 residues long: Hemagglutinin 2 (212 aa).

Its subcellular location is the secreted. Functionally, induces agglutination of neuraminidase-treated erythrocytes. This chain is Hemagglutinin 2 (hag2), found in Eikenella corrodens.